The primary structure comprises 242 residues: Succinyl-CoA:3-ketoacid coenzyme A transferase subunit A (242 aa).

Glycine 33 to glycine 39 serves as a coordination point for CoA.

This sequence belongs to the 3-oxoacid CoA-transferase subunit A family. Heterodimer of a subunit A and a subunit B.

The catalysed reaction is a 3-oxo acid + succinyl-CoA = a 3-oxoacyl-CoA + succinate. It participates in bacterial outer membrane biogenesis; lipopolysaccharide biosynthesis. This is Succinyl-CoA:3-ketoacid coenzyme A transferase subunit A (lpsI) from Xanthomonas campestris pv. campestris (strain ATCC 33913 / DSM 3586 / NCPPB 528 / LMG 568 / P 25).